The chain runs to 116 residues: uncharacterized protein (116 aa).

The chain crosses the membrane as a helical span at residues 5 to 23 (LLAVETWYMLILSFRFLFF).

It localises to the membrane. This is an uncharacterized protein from Saccharomyces cerevisiae (strain ATCC 204508 / S288c) (Baker's yeast).